The chain runs to 80 residues: Exodeoxyribonuclease 7 small subunit (80 aa).

The protein belongs to the XseB family. As to quaternary structure, heterooligomer composed of large and small subunits.

The protein localises to the cytoplasm. It catalyses the reaction Exonucleolytic cleavage in either 5'- to 3'- or 3'- to 5'-direction to yield nucleoside 5'-phosphates.. In terms of biological role, bidirectionally degrades single-stranded DNA into large acid-insoluble oligonucleotides, which are then degraded further into small acid-soluble oligonucleotides. This is Exodeoxyribonuclease 7 small subunit from Pseudomonas entomophila (strain L48).